Reading from the N-terminus, the 295-residue chain is tRNA-cytidine(32) 2-sulfurtransferase (295 aa).

A PP-loop motif motif is present at residues 59-64; the sequence is SGGKDS. 3 residues coordinate [4Fe-4S] cluster: Cys-134, Cys-137, and Cys-225.

The protein belongs to the TtcA family. As to quaternary structure, homodimer. It depends on Mg(2+) as a cofactor. The cofactor is [4Fe-4S] cluster.

Its subcellular location is the cytoplasm. The enzyme catalyses cytidine(32) in tRNA + S-sulfanyl-L-cysteinyl-[cysteine desulfurase] + AH2 + ATP = 2-thiocytidine(32) in tRNA + L-cysteinyl-[cysteine desulfurase] + A + AMP + diphosphate + H(+). It participates in tRNA modification. Functionally, catalyzes the ATP-dependent 2-thiolation of cytidine in position 32 of tRNA, to form 2-thiocytidine (s(2)C32). The sulfur atoms are provided by the cysteine/cysteine desulfurase (IscS) system. The chain is tRNA-cytidine(32) 2-sulfurtransferase from Ruegeria sp. (strain TM1040) (Silicibacter sp.).